The sequence spans 115 residues: Ubiquitin-related modifier 1 (115 aa).

Gly115 is subject to 1-thioglycine. Residue Gly115 forms a Glycyl lysine isopeptide (Gly-Lys) (interchain with K-? in acceptor proteins) linkage.

Belongs to the URM1 family. C-terminal thiocarboxylation occurs in 2 steps, it is first acyl-adenylated (-COAMP) via the hesA/moeB/thiF part of UBA4, then thiocarboxylated (-COSH) via the rhodanese domain of UBA4.

It localises to the cytoplasm. The protein operates within tRNA modification; 5-methoxycarbonylmethyl-2-thiouridine-tRNA biosynthesis. In terms of biological role, acts as a sulfur carrier required for 2-thiolation of mcm(5)S(2)U at tRNA wobble positions of cytosolic tRNA(Lys), tRNA(Glu) and tRNA(Gln). Serves as sulfur donor in tRNA 2-thiolation reaction by being thiocarboxylated (-COSH) at its C-terminus by the MOCS3 homolog UBA4. The sulfur is then transferred to tRNA to form 2-thiolation of mcm(5)S(2)U. Prior mcm(5) tRNA modification by the elongator complex is required for 2-thiolation. Also acts as a ubiquitin-like protein (UBL) that is covalently conjugated via an isopeptide bond to lysine residues of target proteins such as AHP1. The thiocarboxylated form serves as substrate for conjugation and oxidative stress specifically induces the formation of UBL-protein conjugates. The protein is Ubiquitin-related modifier 1 of Coccidioides immitis (strain RS) (Valley fever fungus).